A 298-amino-acid polypeptide reads, in one-letter code: Ribosomal RNA small subunit methyltransferase H (298 aa).

Residues 38-40 (GGH), Asp-57, Phe-84, Asp-100, and Gln-107 each bind S-adenosyl-L-methionine.

Belongs to the methyltransferase superfamily. RsmH family.

The protein localises to the cytoplasm. The catalysed reaction is cytidine(1402) in 16S rRNA + S-adenosyl-L-methionine = N(4)-methylcytidine(1402) in 16S rRNA + S-adenosyl-L-homocysteine + H(+). Specifically methylates the N4 position of cytidine in position 1402 (C1402) of 16S rRNA. The sequence is that of Ribosomal RNA small subunit methyltransferase H from Acaryochloris marina (strain MBIC 11017).